A 524-amino-acid polypeptide reads, in one-letter code: Na(+)/H(+) antiporter NhaB (524 aa).

9 helical membrane-spanning segments follow: residues 13 to 33 (FLGN…IINP), 98 to 118 (LLLV…LFVF), 140 to 160 (AFLS…SVSV), 239 to 259 (FFIR…LVCL), 304 to 324 (AIIG…VGLV), 325 to 345 (GLSV…HSLG), 358 to 378 (LTVF…TPII), 448 to 468 (ATPN…APLI), and 479 to 499 (ALPY…FLLV).

The protein belongs to the NhaB Na(+)/H(+) (TC 2.A.34) antiporter family.

It is found in the cell inner membrane. It carries out the reaction 2 Na(+)(in) + 3 H(+)(out) = 2 Na(+)(out) + 3 H(+)(in). Its function is as follows. Na(+)/H(+) antiporter that extrudes sodium in exchange for external protons. The chain is Na(+)/H(+) antiporter NhaB from Yersinia pseudotuberculosis serotype O:3 (strain YPIII).